The following is a 377-amino-acid chain: Geranylgeranyl transferase type-1 subunit beta (377 aa).

4 PFTB repeats span residues 144–186, 193–234, 245–284, and 291–333; these read KEAC…YMLN, MKKA…CLMG, LNRI…KLLK, and FEKN…SLME. Residues 219 to 221 and 263 to 266 contribute to the geranylgeranyl diphosphate site; these read HGG and RPNK. The Zn(2+) site is built by Asp269 and Cys271. 272 to 275 contacts geranylgeranyl diphosphate; it reads YSFW. His321 provides a ligand contact to Zn(2+).

Belongs to the protein prenyltransferase subunit beta family. In terms of assembly, heterodimer of FNTA and PGGT1B. PGGT1B mediates interaction with substrate peptides. Zn(2+) is required as a cofactor. Requires Mg(2+) as cofactor.

The catalysed reaction is geranylgeranyl diphosphate + L-cysteinyl-[protein] = S-geranylgeranyl-L-cysteinyl-[protein] + diphosphate. In terms of biological role, catalyzes the transfer of a geranyl-geranyl moiety from geranyl-geranyl pyrophosphate to a cysteine at the fourth position from the C-terminus of proteins having the C-terminal sequence Cys-aliphatic-aliphatic-X. Known substrates include RAC1, RAC2, RAP1A and RAP1B. This chain is Geranylgeranyl transferase type-1 subunit beta (PGGT1B), found in Homo sapiens (Human).